Reading from the N-terminus, the 290-residue chain is Programmed cell death 1 ligand 1 (290 aa).

The signal sequence occupies residues 1–18 (MRIFAVFIFMTYWHLLNA). The Ig-like V-type domain occupies 19-127 (FTVTVPKDLY…YGGADYKRIT (109 aa)). At 19–238 (FTVTVPKDLY…LPLAHPPNER (220 aa)) the chain is on the extracellular side. Residue asparagine 35 is glycosylated (N-linked (GlcNAc...) asparagine). 2 disulfide bridges follow: cysteine 40/cysteine 114 and cysteine 155/cysteine 209. In terms of domain architecture, Ig-like C2-type spans 133–225 (PYNKINQRIL…PEENHTAELV (93 aa)). Asparagine 192, asparagine 200, and asparagine 219 each carry an N-linked (GlcNAc...) asparagine glycan. The chain crosses the membrane as a helical span at residues 239–259 (THLVILGAILLCLGVALTFIF). Residues 260–290 (RLRKGRMMDVKKCGIQDTNSKKQSDTHLEET) are Cytoplasmic-facing.

This sequence belongs to the immunoglobulin superfamily. BTN/MOG family. In terms of assembly, interacts with PDCD1. Interacts (via transmembrane domain) with CMTM4 and CMTM6. Interacts with (phosphorylated) STAT3; promoting nuclear translocation. Interacts with CD80. May form homomultimers. In terms of processing, ubiquitinated; STUB1 likely mediates polyubiquitination of PD-L1/CD274 triggering its degradation. Ubiquitinated by MARCHF8; leading to degradation. Deubiquitinated by USP22; leading to stabilization. As to expression, highly expressed in the heart, skeletal muscle, placenta and lung. Weakly expressed in the thymus, spleen, kidney and liver. Expressed on activated T- and B-cells, dendritic cells, keratinocytes and monocytes. Widely expressed, highest in lung, liver and pituitary and in various peripheral blood cells, including neutrophils and some subtypes of lymphoid and myeloid cells.

It is found in the cell membrane. It localises to the early endosome membrane. The protein resides in the recycling endosome membrane. Its subcellular location is the nucleus. The protein localises to the endomembrane system. It is found in the secreted. Functionally, plays a critical role in induction and maintenance of immune tolerance to self. As a ligand for the inhibitory receptor PDCD1/PD-1, modulates the activation threshold of T-cells and limits T-cell effector response. Through a yet unknown activating receptor, may costimulate T-cell subsets that predominantly produce interleukin-10 (IL10). Can also act as a transcription coactivator: in response to hypoxia, translocates into the nucleus via its interaction with phosphorylated STAT3 and promotes transcription of GSDMC, leading to pyroptosis. In terms of biological role, the PDCD1-mediated inhibitory pathway is exploited by tumors to attenuate anti-tumor immunity and escape destruction by the immune system, thereby facilitating tumor survival. The interaction with PDCD1/PD-1 inhibits cytotoxic T lymphocytes (CTLs) effector function. The blockage of the PDCD1-mediated pathway results in the reversal of the exhausted T-cell phenotype and the normalization of the anti-tumor response, providing a rationale for cancer immunotherapy. In Homo sapiens (Human), this protein is Programmed cell death 1 ligand 1.